The sequence spans 180 residues: MAKSALFTVRNNESCPKCGAELVIRSGKHGPFLGCSQYPACDYVRPLKSSADGHIVKVLEGQVCPACGANLVLRQGRFGMFIGCINYPECEHTELIDKPDETAITCPQCRTGHLVQRRSRYGKTFHSCDRYPECQFAINFKPIAGECPECHYPLLIEKKTAQGVKHFCASKQCGKPVSAE.

It to H.influenzae HI_0656.1.

This is an uncharacterized protein from Escherichia coli (strain K12).